The sequence spans 319 residues: Ribosomal protein uL3 glutamine methyltransferase (319 aa).

The protein belongs to the protein N5-glutamine methyltransferase family. PrmB subfamily.

It catalyses the reaction L-glutaminyl-[ribosomal protein uL3] + S-adenosyl-L-methionine = N(5)-methyl-L-glutaminyl-[ribosomal protein uL3] + S-adenosyl-L-homocysteine + H(+). Methylates large ribosomal subunit protein uL3 on a specific glutamine residue. The sequence is that of Ribosomal protein uL3 glutamine methyltransferase from Bradyrhizobium diazoefficiens (strain JCM 10833 / BCRC 13528 / IAM 13628 / NBRC 14792 / USDA 110).